Here is an 894-residue protein sequence, read N- to C-terminus: Eukaryotic translation initiation factor 3 subunit C (894 aa).

Disordered stretches follow at residues 1–28 (MSRFYRRGASDSDTDSSEDEVEELKANK) and 162–235 (SDYR…VTKM). Acidic residues-rich tracts occupy residues 12 to 22 (SDTDSSEDEVE), 169 to 189 (DEDGYETPEDENDEDDFEEVP), and 203 to 214 (SESESDSDDDDS). Polar residues predominate over residues 215-224 (FNWSSEPDTN). The 177-residue stretch at 625–801 (YHMHINVELM…DCLIMHRVEP (177 aa)) folds into the PCI domain. Residues 824–894 (QILEPRTGRG…RRHPQKPRAF (71 aa)) form a disordered region. Residues 845–854 (RNERQGDKQK) show a composition bias toward basic and acidic residues. Gly residues predominate over residues 855–870 (GSGGFQGERRGGPGGP). Over residues 884 to 894 (QRRHPQKPRAF) the composition is skewed to basic residues.

This sequence belongs to the eIF-3 subunit C family. Component of the eukaryotic translation initiation factor 3 (eIF-3) complex.

It is found in the cytoplasm. Component of the eukaryotic translation initiation factor 3 (eIF-3) complex, which is involved in protein synthesis of a specialized repertoire of mRNAs and, together with other initiation factors, stimulates binding of mRNA and methionyl-tRNAi to the 40S ribosome. The eIF-3 complex specifically targets and initiates translation of a subset of mRNAs involved in cell proliferation. The polypeptide is Eukaryotic translation initiation factor 3 subunit C (Caenorhabditis briggsae).